A 232-amino-acid chain; its full sequence is Protein G1-like3 (232 aa).

Disordered stretches follow at residues 20 to 77 (AGLL…YEAQ) and 189 to 232 (ARAR…GAAC). The segment covering 38–53 (AGGGGGGGGDGAGGSS) has biased composition (gly residues). An ALOG domain is found at 73 to 200 (RYEAQKRRDW…ARGVSYEKKK (128 aa)). The Nuclear localization signal motif lies at 198–202 (KKKRK). Over residues 216–232 (PHPPPPPPPPPSAGAAC) the composition is skewed to pro residues.

The protein belongs to the plant homeotic and developmental regulators ALOG protein family.

Its subcellular location is the nucleus. In terms of biological role, probable transcription regulator that acts as a developmental regulator by promoting cell growth in response to light. The chain is Protein G1-like3 from Oryza sativa subsp. indica (Rice).